A 309-amino-acid polypeptide reads, in one-letter code: Probable manganese-dependent inorganic pyrophosphatase (309 aa).

Positions 9, 13, 15, 75, 97, and 149 each coordinate Mn(2+).

This sequence belongs to the PPase class C family. Mn(2+) is required as a cofactor.

Its subcellular location is the cytoplasm. It carries out the reaction diphosphate + H2O = 2 phosphate + H(+). In Bacillus cereus (strain ATCC 10987 / NRS 248), this protein is Probable manganese-dependent inorganic pyrophosphatase.